Consider the following 346-residue polypeptide: Isopentenyl-diphosphate delta-isomerase (346 aa).

9–10 (RK) contributes to the substrate binding site. FMN contacts are provided by residues Ser67, 68 to 70 (SMT), Ser98, and Asn127. 98-100 (SQR) contributes to the substrate binding site. Residue Gln162 participates in substrate binding. Glu163 provides a ligand contact to Mg(2+). Residues Lys194, Thr224, 274 to 276 (GIR), and 295 to 296 (AA) contribute to the FMN site.

This sequence belongs to the IPP isomerase type 2 family. In terms of assembly, homooctamer. Dimer of tetramers. The cofactor is FMN. It depends on NADPH as a cofactor. Mg(2+) serves as cofactor.

Its subcellular location is the cytoplasm. It carries out the reaction isopentenyl diphosphate = dimethylallyl diphosphate. Involved in the biosynthesis of isoprenoids. Catalyzes the 1,3-allylic rearrangement of the homoallylic substrate isopentenyl (IPP) to its allylic isomer, dimethylallyl diphosphate (DMAPP). The protein is Isopentenyl-diphosphate delta-isomerase of Stutzerimonas stutzeri (strain A1501) (Pseudomonas stutzeri).